The chain runs to 347 residues: Ribosomal RNA large subunit methyltransferase M (347 aa).

S-adenosyl-L-methionine-binding positions include Ser184, 217 to 220 (APGG), Asp236, Asp256, and Asp272. Catalysis depends on Lys301, which acts as the Proton acceptor.

This sequence belongs to the class I-like SAM-binding methyltransferase superfamily. RNA methyltransferase RlmE family. RlmM subfamily. Monomer.

It localises to the cytoplasm. The enzyme catalyses cytidine(2498) in 23S rRNA + S-adenosyl-L-methionine = 2'-O-methylcytidine(2498) in 23S rRNA + S-adenosyl-L-homocysteine + H(+). Functionally, catalyzes the 2'-O-methylation at nucleotide C2498 in 23S rRNA. In Xanthomonas euvesicatoria pv. vesicatoria (strain 85-10) (Xanthomonas campestris pv. vesicatoria), this protein is Ribosomal RNA large subunit methyltransferase M.